The chain runs to 352 residues: Protein RecA (352 aa).

Residue 68 to 75 coordinates ATP; it reads GPESSGKT.

Belongs to the RecA family.

It is found in the cytoplasm. Functionally, can catalyze the hydrolysis of ATP in the presence of single-stranded DNA, the ATP-dependent uptake of single-stranded DNA by duplex DNA, and the ATP-dependent hybridization of homologous single-stranded DNAs. It interacts with LexA causing its activation and leading to its autocatalytic cleavage. The chain is Protein RecA from Clostridium perfringens (strain SM101 / Type A).